The chain runs to 183 residues: MNTYVRPALSLILLLAVVTGALYPLAVTGVAQVVFPEQANGSLVRDEQGQVRGSALIAQDFQGDGWFHSRPSAGAYATVASSASNLSPSNPALAERVAGDAAKLYQAGQGPVPQALLTTSGSGLDPHLPPQAVAYQIPRVAAARQIPVERLQALLEGATLHPLIGPPVVNVLALNQALSKFGL.

The helical transmembrane segment at Leu-11 to Ala-31 threads the bilayer.

The protein belongs to the KdpC family. As to quaternary structure, the system is composed of three essential subunits: KdpA, KdpB and KdpC.

Its subcellular location is the cell inner membrane. Its function is as follows. Part of the high-affinity ATP-driven potassium transport (or Kdp) system, which catalyzes the hydrolysis of ATP coupled with the electrogenic transport of potassium into the cytoplasm. This subunit acts as a catalytic chaperone that increases the ATP-binding affinity of the ATP-hydrolyzing subunit KdpB by the formation of a transient KdpB/KdpC/ATP ternary complex. In Pseudomonas putida (strain W619), this protein is Potassium-transporting ATPase KdpC subunit.